A 462-amino-acid polypeptide reads, in one-letter code: uncharacterized protein (462 aa).

Helical transmembrane passes span 12–32 and 257–277; these read WWWL…APTV and GLCV…LELV.

The protein belongs to the HHV-5 US29 protein family.

It is found in the host membrane. This is an uncharacterized protein from Human cytomegalovirus (strain AD169) (HHV-5).